The following is a 148-amino-acid chain: Copper transport protein ctr6 (148 aa).

Topologically, residues 1 to 33 (MNHGGNSTMRHCSMKMTFNTDYDNLCIVFKSWH) are extracellular. Residues 34 to 54 (IGNLSQFLLSLLAIAILGYLF) traverse the membrane as a helical segment. Over 55–108 (ERLRSFTSLKETEFQRGYAGQQSEGLLTHHSKSLKSGRPFRLCALYAVQLVFSY) the chain is Cytoplasmic. A helical membrane pass occupies residues 109–129 (FLMLVAMTYNAYVILAIAIGA). At 130–148 (AFGYRRSHCDTVQTVGLCH) the chain is on the extracellular side.

Belongs to the copper transporter (Ctr) (TC 1.A.56) family. SLC31A subfamily. In terms of assembly, homotrimer.

The protein resides in the vacuole membrane. Mobilizes stored copper from the vacuole to the cytoplasm under conditions of copper limitation. The polypeptide is Copper transport protein ctr6 (ctr6) (Schizosaccharomyces pombe (strain 972 / ATCC 24843) (Fission yeast)).